Reading from the N-terminus, the 260-residue chain is MSHHWGYDSHNGPAHWHEHFPIANGERQSPIAISTKAARYDPALKPLSFSYDAGTAKAIVNNGHSFNVEFDDSSDKSVLQGGALDGVYRLVQFHIHWGSCEGQGSEHTVDGVKYDAELHIVHWNVKYGKFAEALKHPDGLAVVGIFMKVGNAKPEIQKVVDALNSIQTKGKQASFTNFDPTGLLPPCRDYWTYPGSLTTPPLHECVIWHVLKEPITVSSEQMCKLRGLCFSAENEPVCRMVDNWRPCQPLKSREVRASFQ.

Residues 3-259 enclose the Alpha-carbonic anhydrase domain; it reads HHWGYDSHNG…LKSREVRASF (257 aa). Histidine 64 acts as the Proton donor/acceptor in catalysis. Zn(2+) contacts are provided by histidine 94, histidine 96, and histidine 119. 198–199 is a substrate binding site; sequence TT.

The protein belongs to the alpha-carbonic anhydrase family. Zn(2+) serves as cofactor.

It is found in the cytoplasm. The protein localises to the cell membrane. It carries out the reaction hydrogencarbonate + H(+) = CO2 + H2O. The enzyme catalyses urea = cyanamide + H2O. With respect to regulation, inhibited by acetazolamide. Catalyzes the reversible hydration of carbon dioxide. Can also hydrate cyanamide to urea. The chain is Carbonic anhydrase 2 (CA2) from Gallus gallus (Chicken).